Reading from the N-terminus, the 237-residue chain is 2-C-methyl-D-erythritol 4-phosphate cytidylyltransferase (237 aa).

This sequence belongs to the IspD/TarI cytidylyltransferase family. IspD subfamily.

The enzyme catalyses 2-C-methyl-D-erythritol 4-phosphate + CTP + H(+) = 4-CDP-2-C-methyl-D-erythritol + diphosphate. It participates in isoprenoid biosynthesis; isopentenyl diphosphate biosynthesis via DXP pathway; isopentenyl diphosphate from 1-deoxy-D-xylulose 5-phosphate: step 2/6. In terms of biological role, catalyzes the formation of 4-diphosphocytidyl-2-C-methyl-D-erythritol from CTP and 2-C-methyl-D-erythritol 4-phosphate (MEP). The polypeptide is 2-C-methyl-D-erythritol 4-phosphate cytidylyltransferase (Acidithiobacillus ferrooxidans (strain ATCC 23270 / DSM 14882 / CIP 104768 / NCIMB 8455) (Ferrobacillus ferrooxidans (strain ATCC 23270))).